A 743-amino-acid polypeptide reads, in one-letter code: Tudor domain-containing protein 3 (743 aa).

Residues 241-262 (KTFGGGGGGARSNLNIGAAGHR) are disordered. Positions 286–326 (LVDEKALKHITEMGFSKEASRQALMDNANNLEAALNVLLNS) constitute a UBA domain. Disordered stretches follow at residues 327-365 (SKQKPAVGPPARGRGKGRGRGRSEDEEDLGTARPSAPST) and 380-549 (EEPK…CYER). A Phosphoserine modification is found at Ser349. The span at 414 to 431 (PRNDTRQPRNERPPRFQK) shows a compositional bias: basic and acidic residues. The segment covering 432–445 (DTPTSKSTVENSVL) has biased composition (polar residues). Ser438 bears the Phosphoserine mark. 2 stretches are compositionally biased toward basic and acidic residues: residues 464 to 484 (AEERIKCDRPYSRYDRTKDAS) and 536 to 549 (RENQTGHPDHCYER). A Glycyl lysine isopeptide (Lys-Gly) (interchain with G-Cter in SUMO2) cross-link involves residue Lys563. A disordered region spans residues 572–603 (TDYPRPVQSNSLGVPNGETAPPLKGRRVGPIK). A Tudor domain is found at 647–707 (VWKPGDECFA…KPVQTEAWEE (61 aa)). The span at 711–725 (YDHTIEFRRGGDGQP) shows a compositional bias: basic and acidic residues. The tract at residues 711-743 (YDHTIEFRRGGDGQPRRSTRPTQQFYQPPRARN) is disordered. An EBM motif; may mediate interaction with the EJC region spans residues 723–743 (GQPRRSTRPTQQFYQPPRARN).

In terms of assembly, component of mRNA stress granules. Interacts with FMR1, FXR1, FXR2, EWSR1, FUS, SERBP1, EEF1A1 and DDX3X or DDX3Y, and with the small nuclear ribonucleoprotein-associated proteins SNRPB and SNRPN. Interacts with 'Lys-48'-linked tetra-ubiquitin, but not with monoubiquitin or 'Lys-63'-linked ubiquitin chains. May interact with the exon junction complex (EJC) composed at least of CASC3, EIF4A3, MAGOH and RBM8A. Interacts with POLR2A (via the C-terminal domain (CTD)).

It localises to the cytoplasm. It is found in the nucleus. In terms of biological role, scaffolding protein that specifically recognizes and binds dimethylarginine-containing proteins. Plays a role in the regulation of translation of target mRNAs by binding Arg/Gly-rich motifs (GAR) in dimethylarginine-containing proteins. In nucleus, acts as a coactivator: recognizes and binds asymmetric dimethylation on the core histone tails associated with transcriptional activation (H3R17me2a and H4R3me2a) and recruits proteins at these arginine-methylated loci. In cytoplasm, acts as an antiviral factor that participates in the assembly of stress granules together with G3BP1. The sequence is that of Tudor domain-containing protein 3 (Tdrd3) from Mus musculus (Mouse).